Reading from the N-terminus, the 559-residue chain is DNA primase (559 aa).

The segment at 37–61 adopts a CHC2-type zinc-finger fold; the sequence is CPFHEERSASFSVNQVKGFYYCFGC. The 82-residue stretch at 246 to 327 folds into the Toprim domain; sequence KQVIVTEGYL…KGGVILFENN (82 aa). 3 residues coordinate Mg(2+): Glu-252, Asp-296, and Asp-298.

It belongs to the DnaG primase family. As to quaternary structure, monomer. Interacts with DnaB. Zn(2+) serves as cofactor. Mg(2+) is required as a cofactor.

The catalysed reaction is ssDNA + n NTP = ssDNA/pppN(pN)n-1 hybrid + (n-1) diphosphate.. Its function is as follows. RNA polymerase that catalyzes the synthesis of short RNA molecules used as primers for DNA polymerase during DNA replication. The polypeptide is DNA primase (Helicobacter pylori (strain J99 / ATCC 700824) (Campylobacter pylori J99)).